Consider the following 38-residue polypeptide: Large ribosomal subunit protein bL36 (38 aa).

The protein belongs to the bacterial ribosomal protein bL36 family.

The chain is Large ribosomal subunit protein bL36 from Amoebophilus asiaticus (strain 5a2).